We begin with the raw amino-acid sequence, 326 residues long: GTP cyclohydrolase MptA (326 aa).

Belongs to the GTP cyclohydrolase IV family. In terms of assembly, homodimer. Fe(2+) serves as cofactor.

It carries out the reaction GTP + H2O = 7,8-dihydroneopterin 2',3'-cyclic phosphate + formate + diphosphate + H(+). It participates in cofactor biosynthesis; 5,6,7,8-tetrahydromethanopterin biosynthesis. Its function is as follows. Converts GTP to 7,8-dihydro-D-neopterin 2',3'-cyclic phosphate, the first intermediate in the biosynthesis of coenzyme methanopterin. In Methanoregula boonei (strain DSM 21154 / JCM 14090 / 6A8), this protein is GTP cyclohydrolase MptA.